The sequence spans 412 residues: Probable histone-binding protein rba-1 (412 aa).

WD repeat units lie at residues 117 to 157 (NHPG…SEPK), 169 to 209 (GHEG…TISG), 219 to 259 (GHSS…PQLT), 262 to 302 (GHTA…KKMY), 306 to 346 (HHND…DPSS), and 365 to 405 (GHTG…VSSE).

This sequence belongs to the WD repeat RBAP46/RBAP48/MSI1 family. Binds directly to helix 1 of the histone fold of histone H4, a region that is not accessible when H4 is in chromatin. Interacts with zft-11; the interaction is required to suppress the activation of non-neuronal genes in neurons.

It localises to the nucleus. Core histone-binding subunit that may target chromatin assembly factors, chromatin remodeling factors and histone deacetylases to their histone substrates in a manner that is regulated by nucleosomal DNA. Plays a role in regulating cell cycle progression. Required to repress the induction of vulval development by Ras signaling. In association with the zinc finger protein ztf-11, negatively regulates the expression of non-neuronal genes during neurogenesis. The polypeptide is Probable histone-binding protein rba-1 (Caenorhabditis elegans).